We begin with the raw amino-acid sequence, 250 residues long: tRNA (guanine-N(1)-)-methyltransferase (250 aa).

S-adenosyl-L-methionine-binding positions include Gly115 and 135–140 (LGDFVL).

Belongs to the RNA methyltransferase TrmD family. In terms of assembly, homodimer.

The protein localises to the cytoplasm. It catalyses the reaction guanosine(37) in tRNA + S-adenosyl-L-methionine = N(1)-methylguanosine(37) in tRNA + S-adenosyl-L-homocysteine + H(+). Specifically methylates guanosine-37 in various tRNAs. The sequence is that of tRNA (guanine-N(1)-)-methyltransferase from Legionella pneumophila subsp. pneumophila (strain Philadelphia 1 / ATCC 33152 / DSM 7513).